Consider the following 513-residue polypeptide: Flagellin A (513 aa).

It belongs to the bacterial flagellin family. Heteromer of FlaA and FlaB. FlaB is located proximal to the hook while the remainder of the filament is composed of the predominant FlaA.

Its subcellular location is the secreted. The protein localises to the bacterial flagellum. In terms of biological role, flagellin is the subunit protein which polymerizes to form the filaments of bacterial flagella. Important for motility and virulence. The chain is Flagellin A (flaA) from Helicobacter felis (strain ATCC 49179 / CCUG 28539 / NCTC 12436 / CS1).